We begin with the raw amino-acid sequence, 330 residues long: Phenylalanine--tRNA ligase alpha subunit (330 aa).

Glu246 provides a ligand contact to Mg(2+).

Belongs to the class-II aminoacyl-tRNA synthetase family. Phe-tRNA synthetase alpha subunit type 1 subfamily. As to quaternary structure, tetramer of two alpha and two beta subunits. Requires Mg(2+) as cofactor.

It is found in the cytoplasm. It catalyses the reaction tRNA(Phe) + L-phenylalanine + ATP = L-phenylalanyl-tRNA(Phe) + AMP + diphosphate + H(+). The polypeptide is Phenylalanine--tRNA ligase alpha subunit (Wolinella succinogenes (strain ATCC 29543 / DSM 1740 / CCUG 13145 / JCM 31913 / LMG 7466 / NCTC 11488 / FDC 602W) (Vibrio succinogenes)).